A 216-amino-acid chain; its full sequence is Probable ubiquitin-conjugating enzyme E2 ECU01_1010 (216 aa).

Positions 1–10 (MFKPSAHRRL) are enriched in basic residues. Residues 1–29 (MFKPSAHRRLPREDDIIQEDDEDGPLWPS) are disordered. Residues 29–196 (SALRRLSNEE…VIRIAREEDE (168 aa)) enclose the UBC core domain. The Glycyl thioester intermediate role is filled by Cys-120.

Belongs to the ubiquitin-conjugating enzyme family.

The enzyme catalyses S-ubiquitinyl-[E1 ubiquitin-activating enzyme]-L-cysteine + [E2 ubiquitin-conjugating enzyme]-L-cysteine = [E1 ubiquitin-activating enzyme]-L-cysteine + S-ubiquitinyl-[E2 ubiquitin-conjugating enzyme]-L-cysteine.. It participates in protein modification; protein ubiquitination. Functionally, catalyzes the covalent attachment of ubiquitin to other proteins so as to signal them for selective protein degradation. Involved in the formation of multiubiquitin chains. The chain is Probable ubiquitin-conjugating enzyme E2 ECU01_1010 from Encephalitozoon cuniculi (strain GB-M1) (Microsporidian parasite).